The primary structure comprises 380 residues: Succinate--CoA ligase [ADP-forming] subunit beta (380 aa).

In terms of domain architecture, ATP-grasp spans Arg-9–Arg-237. ATP-binding positions include Lys-45, Gly-52–Gly-54, Val-94, and Glu-99. Mg(2+) contacts are provided by Asn-192 and Asp-206. Substrate-binding positions include Asn-257 and Gly-314 to Thr-316.

Belongs to the succinate/malate CoA ligase beta subunit family. In terms of assembly, heterotetramer of two alpha and two beta subunits. Mg(2+) serves as cofactor.

It carries out the reaction succinate + ATP + CoA = succinyl-CoA + ADP + phosphate. The catalysed reaction is GTP + succinate + CoA = succinyl-CoA + GDP + phosphate. Its pathway is carbohydrate metabolism; tricarboxylic acid cycle; succinate from succinyl-CoA (ligase route): step 1/1. Succinyl-CoA synthetase functions in the citric acid cycle (TCA), coupling the hydrolysis of succinyl-CoA to the synthesis of either ATP or GTP and thus represents the only step of substrate-level phosphorylation in the TCA. The beta subunit provides nucleotide specificity of the enzyme and binds the substrate succinate, while the binding sites for coenzyme A and phosphate are found in the alpha subunit. This Chloroflexus aurantiacus (strain ATCC 29366 / DSM 635 / J-10-fl) protein is Succinate--CoA ligase [ADP-forming] subunit beta.